We begin with the raw amino-acid sequence, 23 residues long: NLLQFNKMIKIMTKKNAFPFYTS.

It belongs to the phospholipase A2 family. Group II subfamily. The cofactor is Ca(2+). In terms of processing, contains 7 disulfide bonds. Expressed by the venom gland.

It localises to the secreted. The catalysed reaction is a 1,2-diacyl-sn-glycero-3-phosphocholine + H2O = a 1-acyl-sn-glycero-3-phosphocholine + a fatty acid + H(+). Functionally, snake venom phospholipase A2 (PLA2) that shows myotoxic activities. PLA2 catalyzes the calcium-dependent hydrolysis of the 2-acyl groups in 3-sn-phosphoglycerides. This chain is Basic phospholipase A2 Smb-N6, found in Sistrurus miliarius barbouri (Dusky pigmy rattlesnake).